The chain runs to 172 residues: Trypsin inhibitor DE-3 (172 aa).

2 disulfides stabilise this stretch: Cys39–Cys83 and Cys132–Cys139.

This sequence belongs to the protease inhibitor I3 (leguminous Kunitz-type inhibitor) family.

Functionally, inhibition of trypsin. This Erythrina caffra (Kaffir tree) protein is Trypsin inhibitor DE-3.